The following is a 64-amino-acid chain: Neurotoxin lambda-MeuTx (64 aa).

An N-terminal signal peptide occupies residues 1 to 18 (MSTFIVVFLLLTAILCHA). A propeptide spanning residues 19–27 (EHAIDETAR) is cleaved from the precursor. Disulfide bonds link C29–C43, C36–C49, and C42–C58.

It belongs to the scorpion calcin-like family. As to expression, expressed by the venom gland.

The protein localises to the secreted. Functionally, voltage-gated potassium channel (Kv) inhibitor. In addition it may increase intracellular calcium release through the activation of nuclear inositol 1,4,5-trisphosphate receptors (ITPR) of cardiomyocytes, thereby causing an increase in the contraction frequency of these cells. The polypeptide is Neurotoxin lambda-MeuTx (Mesobuthus eupeus (Lesser Asian scorpion)).